Consider the following 302-residue polypeptide: L-aminoadipate-semialdehyde dehydrogenase-phosphopantetheinyl transferase (302 aa).

CoA contacts are provided by residues Arg44, 83-88 (RTGKGK), and 105-108 (NVSH). Mg(2+) is bound by residues Asp126 and Glu178. A CoA-binding site is contributed by 178 to 182 (ESFIK).

It belongs to the P-Pant transferase superfamily. AcpS family. As to quaternary structure, monomer. Requires Mg(2+) as cofactor.

It localises to the cytoplasm. Its subcellular location is the cytosol. The catalysed reaction is apo-[ACP] + CoA = holo-[ACP] + adenosine 3',5'-bisphosphate + H(+). It carries out the reaction apo-[ACP] + acetyl-CoA = acetyl-[ACP] + adenosine 3',5'-bisphosphate + H(+). In terms of biological role, catalyzes the post-translational modification of target proteins by phosphopantetheine. Can transfer the 4'-phosphopantetheine moiety from coenzyme A, regardless of whether the CoA is presented in the free thiol form or as an acetyl thioester, to a serine residue of a broad range of acceptors. The chain is L-aminoadipate-semialdehyde dehydrogenase-phosphopantetheinyl transferase (aasdhppt) from Xenopus laevis (African clawed frog).